Here is an 83-residue protein sequence, read N- to C-terminus: CLAVATA3/ESR (CLE)-related protein 3 (83 aa).

A signal peptide spans 1 to 24 (MASLKLWVCLVLLLVLELTSVHEC). Residues 38-58 (RLKKIRRELFERLKEMKGRSE) are a coiled coil. Residues 53-83 (MKGRSEGEETILGNTLDSKRLSPGGPDPRHH) form a disordered region. A hydroxyproline mark is found at P75 and P78. An O-linked (Ara...) hydroxyproline glycan is attached at P78.

It belongs to the CLV3/ESR signal peptide family. Post-translationally, the O-glycosylation (arabinosylation) of the hydroxyproline Pro-78 enhances binding affinity of the CLE3p peptide for its receptor. Mostly expressed in roots, stems and apex, and, to a lower extent, in seedlings, leaves, flowers, siliques and pollen.

It is found in the secreted. Its subcellular location is the extracellular space. Extracellular signal peptide that regulates cell fate. In Arabidopsis thaliana (Mouse-ear cress), this protein is CLAVATA3/ESR (CLE)-related protein 3.